Reading from the N-terminus, the 455-residue chain is SH3 domain-binding protein 5 (455 aa).

The segment covering 1-12 (MDAALKRSRSEE) has biased composition (basic and acidic residues). The interval 1–63 (MDAALKRSRS…QSTDDINRRE (63 aa)) is disordered. A compositionally biased stretch (acidic residues) spans 22–41 (DEEEEEEEGMEQGLEEEEEV). Residues 31 to 265 (MEQGLEEEEE…EIHERRRSSA (235 aa)) form a sufficient for interaction with RAB11A and for guanine nucleotide exchange activity region. Basic and acidic residues predominate over residues 42–51 (DPRIQGELEK). Coiled-coil stretches lie at residues 44-90 (RIQG…LVKK), 97-145 (DSKP…RLLE), 154-200 (AWQE…LEKK), and 211-255 (YFEL…MISD). Disordered regions lie at residues 259–293 (ERRR…PEPD) and 306–345 (SCSN…VRPG). Over residues 306 to 317 (SCSNFVSEDDSE) the composition is skewed to acidic residues. Positions 320 to 332 (SVSSFSSGPTSPS) are enriched in low complexity. Ser351 is modified (phosphoserine; by MAPK12 and MAPK9). Positions 369 to 435 (SECSGASSPE…ALENRMKQLS (67 aa)) are disordered. Residues Ser375 and Ser376 each carry the phosphoserine modification. Positions 380 to 396 (EVERGDRAEGAENKTSD) are enriched in basic and acidic residues. Residues 403–421 (GLSSSSGSGGSSKSQSSTS) are compositionally biased toward low complexity. A phosphoserine mark is found at Ser418 and Ser421.

It belongs to the SH3BP5 family. As to quaternary structure, interacts with BTK. Interacts with all isoforms of MAPK8, MAPK9, MAPK10 and MAPK12. Interacts with GDP-bound and nucleotide-free forms of RAB11A. As to expression, highly expressed in testis and ovaries. It is also expressed in a variety of tissues including spleen, lymph node, thymus, bone marrow, fetal liver, colon, small intestine and prostate.

The protein localises to the cytoplasmic vesicle membrane. Its subcellular location is the mitochondrion. Functions as a guanine nucleotide exchange factor (GEF) with specificity for RAB11A and RAB25. Inhibits the auto- and transphosphorylation activity of BTK. Plays a negative regulatory role in BTK-related cytoplasmic signaling in B-cells. May be involved in BCR-induced apoptotic cell death. This Homo sapiens (Human) protein is SH3 domain-binding protein 5 (SH3BP5).